The primary structure comprises 155 residues: Endoribonuclease YbeY (155 aa).

H114, H118, and H124 together coordinate Zn(2+).

It belongs to the endoribonuclease YbeY family. Zn(2+) serves as cofactor.

The protein resides in the cytoplasm. In terms of biological role, single strand-specific metallo-endoribonuclease involved in late-stage 70S ribosome quality control and in maturation of the 3' terminus of the 16S rRNA. The sequence is that of Endoribonuclease YbeY from Erwinia tasmaniensis (strain DSM 17950 / CFBP 7177 / CIP 109463 / NCPPB 4357 / Et1/99).